The sequence spans 215 residues: Protein NETWORKED 3B (215 aa).

Residues 5 to 90 (SKWWWIGANH…QKHDLLIKTS (86 aa)) enclose the NAB domain. Residues 134 to 165 (DETMKEELEILREENRVYKEKKEVVTRLLANL) are a coiled coil.

The protein belongs to the NET family. In terms of assembly, interacts with F-actin.

Plant-specific actin binding protein. May be part of a membrane-cytoskeletal adapter complex. This chain is Protein NETWORKED 3B, found in Arabidopsis thaliana (Mouse-ear cress).